Here is a 914-residue protein sequence, read N- to C-terminus: Protein translocase subunit SecA (914 aa).

ATP is bound by residues Gln87, 105-109, and Asp508; that span reads GEGKT. Residues Cys898, Cys900, Cys909, and His910 each coordinate Zn(2+).

The protein belongs to the SecA family. In terms of assembly, monomer and homodimer. Part of the essential Sec protein translocation apparatus which comprises SecA, SecYEG and auxiliary proteins SecDF-YajC and YidC. Requires Zn(2+) as cofactor.

It localises to the cell inner membrane. It is found in the cytoplasm. The catalysed reaction is ATP + H2O + cellular proteinSide 1 = ADP + phosphate + cellular proteinSide 2.. Its function is as follows. Part of the Sec protein translocase complex. Interacts with the SecYEG preprotein conducting channel. Has a central role in coupling the hydrolysis of ATP to the transfer of proteins into and across the cell membrane, serving both as a receptor for the preprotein-SecB complex and as an ATP-driven molecular motor driving the stepwise translocation of polypeptide chains across the membrane. The protein is Protein translocase subunit SecA of Xylella fastidiosa (strain M12).